Reading from the N-terminus, the 22-residue chain is Mu-conotoxin GIIIC (22 aa).

Disulfide bonds link C3-C15, C4-C20, and C10-C21. P6, P7, and P17 each carry 4-hydroxyproline. At A22 the chain carries Alanine amide.

This sequence belongs to the conotoxin M superfamily. Expressed by the venom duct.

The protein resides in the secreted. In terms of biological role, mu-conotoxins block voltage-gated sodium channels (Nav). This toxin shows potent activity on Nav1.4/SCN4A (IC(50)=286 nM), and weak activity on mNav1.6/SCN8A. This is Mu-conotoxin GIIIC from Conus geographus (Geography cone).